The sequence spans 197 residues: Thymidine kinase (197 aa).

ATP-binding positions include 9–16 (SAMDAGKT) and 87–90 (DEIH). Glu88 serves as the catalytic Proton acceptor. The Zn(2+) site is built by Cys145, Cys147, Cys187, and His190.

This sequence belongs to the thymidine kinase family. Homotetramer.

The protein localises to the cytoplasm. The catalysed reaction is thymidine + ATP = dTMP + ADP + H(+). This chain is Thymidine kinase, found in Francisella tularensis subsp. tularensis (strain SCHU S4 / Schu 4).